The chain runs to 309 residues: Porphobilinogen deaminase (309 aa).

Position 242 is an S-(dipyrrolylmethanemethyl)cysteine (C242).

It belongs to the HMBS family. As to quaternary structure, monomer. Dipyrromethane serves as cofactor.

It catalyses the reaction 4 porphobilinogen + H2O = hydroxymethylbilane + 4 NH4(+). The protein operates within porphyrin-containing compound metabolism; protoporphyrin-IX biosynthesis; coproporphyrinogen-III from 5-aminolevulinate: step 2/4. Its function is as follows. Tetrapolymerization of the monopyrrole PBG into the hydroxymethylbilane pre-uroporphyrinogen in several discrete steps. The sequence is that of Porphobilinogen deaminase from Pseudoalteromonas atlantica (strain T6c / ATCC BAA-1087).